Here is a 603-residue protein sequence, read N- to C-terminus: 65-kDa microtubule-associated protein 7 (603 aa).

Coiled-coil stretches lie at residues 48-79 (KECL…EAEI), 131-186 (DIKA…EKSD), and 468-502 (RLVS…LLIK). The disordered stretch occupies residues 501-559 (IKRRESIYGSKPSPRRSNSVRKTNGYNGDASVPPTPRRNSAGATNNDIMTTPRSYSSHR). Position 513 is a phosphoserine (Ser513). Composition is skewed to polar residues over residues 515–526 (RRSNSVRKTNGY) and 537–559 (RRNS…SSHR). At Ser599 the chain carries Phosphoserine.

Belongs to the MAP65/ASE1 family. As to quaternary structure, forms dimer. Binds to microtubules (MT).

It localises to the nucleus. Its subcellular location is the cytoplasm. The protein resides in the cytoskeleton. The protein localises to the spindle pole. In Arabidopsis thaliana (Mouse-ear cress), this protein is 65-kDa microtubule-associated protein 7 (MAP65-7).